The primary structure comprises 310 residues: Protoheme IX farnesyltransferase (310 aa).

The next 9 helical transmembrane spans lie at valine 31–histidine 51, proline 52–methionine 72, alanine 102–leucine 119, isoleucine 123–lysine 145, asparagine 151–serine 171, isoleucine 179–phenylalanine 199, isoleucine 225–asparagine 245, isoleucine 248–phenylalanine 268, and phenylalanine 281–isoleucine 301.

The protein belongs to the UbiA prenyltransferase family. Protoheme IX farnesyltransferase subfamily.

Its subcellular location is the cell inner membrane. The catalysed reaction is heme b + (2E,6E)-farnesyl diphosphate + H2O = Fe(II)-heme o + diphosphate. The protein operates within porphyrin-containing compound metabolism; heme O biosynthesis; heme O from protoheme: step 1/1. Its function is as follows. Converts heme B (protoheme IX) to heme O by substitution of the vinyl group on carbon 2 of heme B porphyrin ring with a hydroxyethyl farnesyl side group. The sequence is that of Protoheme IX farnesyltransferase from Rickettsia prowazekii (strain Madrid E).